A 207-amino-acid polypeptide reads, in one-letter code: Ribosomal RNA large subunit methyltransferase E (207 aa).

S-adenosyl-L-methionine-binding residues include Gly-60, Trp-62, Asp-80, Asp-96, and Asp-121. Lys-161 acts as the Proton acceptor in catalysis.

Belongs to the class I-like SAM-binding methyltransferase superfamily. RNA methyltransferase RlmE family.

Its subcellular location is the cytoplasm. The catalysed reaction is uridine(2552) in 23S rRNA + S-adenosyl-L-methionine = 2'-O-methyluridine(2552) in 23S rRNA + S-adenosyl-L-homocysteine + H(+). Specifically methylates the uridine in position 2552 of 23S rRNA at the 2'-O position of the ribose in the fully assembled 50S ribosomal subunit. The chain is Ribosomal RNA large subunit methyltransferase E from Ectopseudomonas mendocina (strain ymp) (Pseudomonas mendocina).